Reading from the N-terminus, the 258-residue chain is Ubiquinone/menaquinone biosynthesis C-methyltransferase UbiE (258 aa).

Residues Thr-81, Asp-102, and 130–131 (NA) each bind S-adenosyl-L-methionine.

It belongs to the class I-like SAM-binding methyltransferase superfamily. MenG/UbiE family.

The enzyme catalyses a 2-demethylmenaquinol + S-adenosyl-L-methionine = a menaquinol + S-adenosyl-L-homocysteine + H(+). The catalysed reaction is a 2-methoxy-6-(all-trans-polyprenyl)benzene-1,4-diol + S-adenosyl-L-methionine = a 5-methoxy-2-methyl-3-(all-trans-polyprenyl)benzene-1,4-diol + S-adenosyl-L-homocysteine + H(+). It participates in quinol/quinone metabolism; menaquinone biosynthesis; menaquinol from 1,4-dihydroxy-2-naphthoate: step 2/2. The protein operates within cofactor biosynthesis; ubiquinone biosynthesis. Its function is as follows. Methyltransferase required for the conversion of demethylmenaquinol (DMKH2) to menaquinol (MKH2) and the conversion of 2-polyprenyl-6-methoxy-1,4-benzoquinol (DDMQH2) to 2-polyprenyl-3-methyl-6-methoxy-1,4-benzoquinol (DMQH2). This chain is Ubiquinone/menaquinone biosynthesis C-methyltransferase UbiE, found in Rhizobium rhizogenes (strain K84 / ATCC BAA-868) (Agrobacterium radiobacter).